We begin with the raw amino-acid sequence, 374 residues long: Alanine racemase (374 aa).

Lysine 34 serves as the catalytic Proton acceptor; specific for D-alanine. Lysine 34 carries the post-translational modification N6-(pyridoxal phosphate)lysine. Substrate is bound at residue arginine 147. Tyrosine 271 serves as the catalytic Proton acceptor; specific for L-alanine. Methionine 319 lines the substrate pocket.

Belongs to the alanine racemase family. Requires pyridoxal 5'-phosphate as cofactor.

It carries out the reaction L-alanine = D-alanine. The protein operates within amino-acid biosynthesis; D-alanine biosynthesis; D-alanine from L-alanine: step 1/1. Functionally, catalyzes the interconversion of L-alanine and D-alanine. May also act on other amino acids. The polypeptide is Alanine racemase (alr) (Haemophilus ducreyi (strain 35000HP / ATCC 700724)).